The sequence spans 40 residues: Putative protein FAM86JP (40 aa).

Residues 1 to 40 are disordered; the sequence is MPGAFSQNSSKRRAVLPRSHRVAGRGPAEAGCLPGAPAGS. The segment covering 10-23 has biased composition (basic residues); sequence SKRRAVLPRSHRVA.

The protein is Putative protein FAM86JP of Homo sapiens (Human).